Consider the following 1155-residue polypeptide: Protein BREAST CANCER SUSCEPTIBILITY 2 homolog B (1155 aa).

BRCA2 repeat units lie at residues 63–97, 116–150, 163–197, and 257–291; these read MPGE…ENVA, TAET…SDMI, FGVP…LEED, and LKVP…DPEL.

Interacts with RAD51 and DMC1. Interacts with DSS1(I) and DSS1(V). Can interact with both RAD51 and DSS1(I) or both DMC1 and DSS1(I) in a tripartite complex. As to expression, expressed in flower buds.

Functionally, involved in double-strand break repair and/or homologous recombination by mediating RAD51- and DMC1-facilitated DNA repair. Plays an essential role in both somatic and meiotic homologous recombination. Is crucial for the formation of RAD51 and DMC1 foci during male meiotic homologous recombination in prophase I. The sequence is that of Protein BREAST CANCER SUSCEPTIBILITY 2 homolog B from Arabidopsis thaliana (Mouse-ear cress).